A 215-amino-acid polypeptide reads, in one-letter code: uncharacterized protein (215 aa).

It is found in the mitochondrion. This is an uncharacterized protein from Arabidopsis thaliana (Mouse-ear cress).